Reading from the N-terminus, the 517-residue chain is 2-isopropylmalate synthase (517 aa).

Residues 5–267 (VIIFDTTLRD…HTNVRCQEIY (263 aa)) enclose the Pyruvate carboxyltransferase domain. Residues Asp-14, His-202, His-204, and Asn-238 each coordinate Mn(2+). The interval 392 to 517 (RLKCFHVDSS…QRKYIKKNNN (126 aa)) is regulatory domain.

It belongs to the alpha-IPM synthase/homocitrate synthase family. LeuA type 1 subfamily. As to quaternary structure, homodimer. Mn(2+) is required as a cofactor.

Its subcellular location is the cytoplasm. The enzyme catalyses 3-methyl-2-oxobutanoate + acetyl-CoA + H2O = (2S)-2-isopropylmalate + CoA + H(+). Its pathway is amino-acid biosynthesis; L-leucine biosynthesis; L-leucine from 3-methyl-2-oxobutanoate: step 1/4. Catalyzes the condensation of the acetyl group of acetyl-CoA with 3-methyl-2-oxobutanoate (2-ketoisovalerate) to form 3-carboxy-3-hydroxy-4-methylpentanoate (2-isopropylmalate). This chain is 2-isopropylmalate synthase, found in Blochmanniella pennsylvanica (strain BPEN).